A 336-amino-acid polypeptide reads, in one-letter code: uncharacterized protein (336 aa).

Residues 1–21 (MSELVLITGITGFVASHSAEA) form the signal peptide. Residue K38 participates in NADP(+) binding. At T153 the chain carries Phosphothreonine. Residue Y167 participates in NADP(+) binding.

This sequence belongs to the NAD(P)-dependent epimerase/dehydratase family. Dihydroflavonol-4-reductase subfamily.

This is an uncharacterized protein from Schizosaccharomyces pombe (strain 972 / ATCC 24843) (Fission yeast).